Reading from the N-terminus, the 533-residue chain is Putative replication factor C large subunit (533 aa).

Polar residues predominate over residues 1–11 (MSKTAKNTKTI). The segment at 1–31 (MSKTAKNTKTIKSVKSVNKDNKPNKDNKDDK) is disordered. A compositionally biased stretch (basic and acidic residues) spans 17 to 31 (VNKDNKPNKDNKDDK).

This sequence belongs to the activator 1 large subunit family.

Functionally, part of the RFC clamp loader complex which loads the PCNA sliding clamp onto DNA. The chain is Putative replication factor C large subunit from Acanthamoeba polyphaga (Amoeba).